A 61-amino-acid chain; its full sequence is Large ribosomal subunit protein uL30 (61 aa).

Belongs to the universal ribosomal protein uL30 family. Part of the 50S ribosomal subunit.

The chain is Large ribosomal subunit protein uL30 from Dichelobacter nodosus (strain VCS1703A).